Consider the following 382-residue polypeptide: tRNA-queuosine alpha-mannosyltransferase (382 aa).

Belongs to the glycosyltransferase group 1 family. Glycosyltransferase 4 subfamily.

The protein resides in the cytoplasm. Its subcellular location is the nucleus. It carries out the reaction queuosine(34) in tRNA(Asp) + GDP-alpha-D-mannose = O-4''-alpha-D-mannosylqueuosine(34) in tRNA(Asp) + GDP + H(+). In terms of biological role, glycosyltransferase that specifically catalyzes mannosylation of cytoplasmic tRNA(Asp) modified with queuosine at position 34 (queuosine(34)). Mannosylates the cyclopentene moiety of queuosine(34) in tRNA(Asp) to form mannosyl-queuosine(34). Mannosylation of queuosine(34) in tRNA(Asp) is required to slow-down elongation at cognate codons, GAC and GAU, thereby regulating protein translation. This Gallus gallus (Chicken) protein is tRNA-queuosine alpha-mannosyltransferase (GTDC1).